The primary structure comprises 581 residues: Zinc metalloproteinase nas-36 (581 aa).

A propeptide spanning residues 1–95 is cleaved from the precursor; the sequence is MKEIAHSQAY…FRGANEKGKR (95 aa). Residue Asn-67 is glycosylated (N-linked (GlcNAc...) asparagine). The 194-residue stretch at 97-290 folds into the Peptidase M12A domain; the sequence is AAEYDAKWFQ…IKLINEAYCK (194 aa). 5 disulfide bridges follow: Cys-137-Cys-289, Cys-159-Cys-178, Cys-293-Cys-313, Cys-315-Cys-324, and Cys-336-Cys-364. A Zn(2+)-binding site is contributed by His-186. The active site involves Glu-187. The Zn(2+) site is built by His-190 and His-196. An EGF-like domain is found at 285–325; that stretch reads NEAYCKGDCKEKNECKNGGYLNPSNCQSCLCPSGFGGSKCE. In terms of domain architecture, CUB spans 336-449; the sequence is CGGTLKAIID…TGFKLKFRKT (114 aa). Asn-418 is a glycosylation site (N-linked (GlcNAc...) asparagine). Residues 474–523 form the TSP type-1 domain; that stretch reads NDIWSEWGEWSQCSRSCGACGIKSRLRICKTAQCSGKVQQFLTCNLQACP. Intrachain disulfides connect Cys-486–Cys-517, Cys-490–Cys-522, and Cys-502–Cys-507.

Zn(2+) serves as cofactor.

Its subcellular location is the secreted. With respect to regulation, inhibited by 1,10-phenanthroline. Functionally, metalloprotease. Involved in molting, a process during larval stages in which a new cuticle is formed and the old cuticle is shed. This chain is Zinc metalloproteinase nas-36, found in Brugia malayi (Filarial nematode worm).